A 1236-amino-acid polypeptide reads, in one-letter code: Calcium-activated potassium channel subunit alpha-1 (1236 aa).

The span at 1-21 (MANGGGGGGGSSGGGGGGGGS) shows a compositional bias: gly residues. Positions 1–61 (MANGGGGGGG…SSSSSSSSSV (61 aa)) are disordered. Residues 1-86 (MANGGGGGGG…VPCDSRGQRM (86 aa)) lie on the Extracellular side of the membrane. The segment covering 39-60 (SSSSSSSSSSSSSSSSSSSSSS) has biased composition (low complexity). A helical membrane pass occupies residues 87-107 (WWAFLASSMVTFFGGLFIILL). Residues 108–178 (WRTLKYLWTV…MISAQTLTGR (71 aa)) lie on the Cytoplasmic side of the membrane. 3 S-palmitoyl cysteine lipidation sites follow: Cys118, Cys119, and Cys121. A helical membrane pass occupies residues 179-199 (VLVVLVFALSIGALVIYFIDS). Residues 200–214 (SNPIESCQNFYKDFT) are Extracellular-facing. The chain crosses the membrane as a helical span at residues 215–235 (LQIDMAFNVFFLLYFGLRFIA). Topologically, residues 236–239 (ANDK) are cytoplasmic. A helical transmembrane segment spans residues 240 to 260 (LWFWLEVNSVVDFFTVPPVFV). Over 261-264 (SVYL) the chain is Extracellular. The chain crosses the membrane as a helical span at residues 265-285 (NRSWLGLRFLRALRLIQFSEI). The Cytoplasmic portion of the chain corresponds to 286 to 300 (LQFLNILKTSNSIKL). A helical membrane pass occupies residues 301–321 (VNLLSIFISTWLTAAGFIHLV). The Extracellular segment spans residues 322–335 (ENSGDPWENFQNNQ). Positions 336–358 (ALTYWECVYLLMVTMSTVGYGDV) form an intramembrane region, pore-forming. The Selectivity for potassium motif lies at 352-355 (TVGY). Residues 359–367 (YAKTTLGRL) are Extracellular-facing. A helical transmembrane segment spans residues 368-388 (FMVFFILGGLAMFASYVPEII). Residues 389–1236 (ELIGNRKKYG…KQKYVQEERL (848 aa)) lie on the Cytoplasmic side of the membrane. Residues 407 to 549 (RKHIVVCGHI…WNWKEGDDAI (143 aa)) enclose the RCK N-terminal 1 domain. The Mg(2+) site is built by Glu439, Gln462, and Glu464. The tract at residues 556 to 576 (LGFIAQSCLAQGLSTMLANLF) is segment S7. Positions 613–633 (LSFPTVCELCFVKLKLLMIAI) are segment S8. The segment at 677–681 (CKACH) is heme-binding motif. Residues 757–787 (EDEQPSTLSPKKKQRNGGMRNSPNTSPKLMR) are disordered. Thr763 carries the phosphothreonine modification. 3 positions are modified to phosphoserine: Ser765, Ser778, and Ser782. Positions 837–857 (VLSGHVVVCIFGDVSSALIGL) are segment S9. An RCK N-terminal 2 domain is found at 839–983 (SGHVVVCIFG…MDRSSPDNSP (145 aa)). Thr970 carries the phosphothreonine modification. Ser978 and Ser982 each carry phosphoserine. The Calcium bowl motif lies at 1003–1025 (TELVNDTNVQFLDQDDDDDPDTE). Ca(2+) contacts are provided by Gln1012, Asp1015, Asp1018, and Asp1020. A segment S10 region spans residues 1032-1052 (FACGTAFAVSVLDSLMSATYF). The span at 1186 to 1211 (RASLSHSSHSSQSSSKKSSSVHSIPS) shows a compositional bias: low complexity. A disordered region spans residues 1186–1236 (RASLSHSSHSSQSSSKKSSSVHSIPSTANRQNRPKSRESRDKQKYVQEERL). A compositionally biased stretch (basic and acidic residues) spans 1220–1236 (KSRESRDKQKYVQEERL). Phosphoserine is present on residues Ser1221 and Ser1224.

Belongs to the potassium channel family. Calcium-activated (TC 1.A.1.3) subfamily. KCa1.1/KCNMA1 sub-subfamily. Homotetramer; which constitutes the calcium-activated potassium channel. Interacts with RAB11B. Interacts with beta subunits KCNMB1, KCNMB2, KCNMB3 and KCNMB4. Interacts with gamma subunits LRRC26, LRRC38, LRRC52 and LRRC55. Beta and gamma subunits are accessory, and modulate its activity. Post-translationally, phosphorylated. Phosphorylation by kinases such as PKA and/or PKG. In smooth muscles, phosphorylation affects its activity. In terms of processing, palmitoylation by ZDHHC22 and ZDHHC23 within the intracellular linker between the S0 and S1 transmembrane domains regulates localization to the plasma membrane. Depalmitoylated by LYPLA1 and LYPLAL1, leading to retard exit from the trans-Golgi network. In terms of tissue distribution, widely expressed. Except in myocytes, it is almost ubiquitously expressed.

The protein localises to the cell membrane. The enzyme catalyses K(+)(in) = K(+)(out). Ethanol and carbon monoxide-bound heme increase channel activation. Heme inhibits channel activation. Potassium channel activated by both membrane depolarization or increase in cytosolic Ca(2+) that mediates export of K(+). It is also activated by the concentration of cytosolic Mg(2+). Its activation dampens the excitatory events that elevate the cytosolic Ca(2+) concentration and/or depolarize the cell membrane. It therefore contributes to repolarization of the membrane potential. Plays a key role in controlling excitability in a number of systems, such as regulation of the contraction of smooth muscle, the tuning of hair cells in the cochlea, regulation of transmitter release, and innate immunity. In smooth muscles, its activation by high level of Ca(2+), caused by ryanodine receptors in the sarcoplasmic reticulum, regulates the membrane potential. In cochlea cells, its number and kinetic properties partly determine the characteristic frequency of each hair cell and thereby helps to establish a tonotopic map. Kinetics of KCNMA1 channels are determined by alternative splicing, phosphorylation status and its combination with modulating beta subunits. Highly sensitive to both iberiotoxin (IbTx) and charybdotoxin (CTX). Possibly induces sleep when activated by melatonin and through melatonin receptor MTNR1A-dependent dissociation of G-beta and G-gamma subunits, leading to increased sensitivity to Ca(2+) and reduced synaptic transmission. In terms of biological role, potassium channel activated by both membrane depolarization or increase in cytosolic Ca(2+) that mediates export of K(+). This chain is Calcium-activated potassium channel subunit alpha-1, found in Homo sapiens (Human).